Reading from the N-terminus, the 251-residue chain is Vitamin B12 import ATP-binding protein BtuD (251 aa).

An ABC transporter domain is found at isoleucine 2 to serine 236. Glycine 30–serine 37 serves as a coordination point for ATP.

It belongs to the ABC transporter superfamily. Vitamin B12 importer (TC 3.A.1.13.1) family. As to quaternary structure, the complex is composed of two ATP-binding proteins (BtuD), two transmembrane proteins (BtuC) and a solute-binding protein (BtuF).

It is found in the cell inner membrane. The enzyme catalyses an R-cob(III)alamin(out) + ATP + H2O = an R-cob(III)alamin(in) + ADP + phosphate + H(+). Its function is as follows. Part of the ABC transporter complex BtuCDF involved in vitamin B12 import. Responsible for energy coupling to the transport system. The protein is Vitamin B12 import ATP-binding protein BtuD of Vibrio cholerae serotype O1 (strain ATCC 39315 / El Tor Inaba N16961).